We begin with the raw amino-acid sequence, 98 residues long: Large ribosomal subunit protein uL23 (98 aa).

It belongs to the universal ribosomal protein uL23 family. In terms of assembly, part of the 50S ribosomal subunit. Contacts protein L29, and trigger factor when it is bound to the ribosome.

In terms of biological role, one of the early assembly proteins it binds 23S rRNA. One of the proteins that surrounds the polypeptide exit tunnel on the outside of the ribosome. Forms the main docking site for trigger factor binding to the ribosome. The sequence is that of Large ribosomal subunit protein uL23 from Streptococcus pyogenes serotype M1.